The primary structure comprises 57 residues: uncharacterized protein (57 aa).

The helical transmembrane segment at alanine 34–valine 54 threads the bilayer.

It is found in the membrane. This is an uncharacterized protein from Dictyostelium discoideum (Social amoeba).